Here is a 128-residue protein sequence, read N- to C-terminus: Insulin-like 3 (128 aa).

Positions 1–15 are cleaved as a signal peptide; the sequence is MHALLLLLLLALGSA. 3 disulfides stabilise this stretch: cysteine 29-cysteine 113, cysteine 41-cysteine 126, and cysteine 112-cysteine 117. The span at 81–94 shows a compositional bias: low complexity; it reads ALDPDPALDPQLPH. Residues 81–101 are disordered; that stretch reads ALDPDPALDPQLPHQASQRQR.

It belongs to the insulin family. As to quaternary structure, heterodimer of a B chain and an A chain linked by two disulfide bonds. Expressed in Leydig cells of the testis, and weakly in the theca interna cells of antral follicles and the corpus luteum of the ovary.

It localises to the secreted. In terms of biological role, seems to play a role in testicular function. May be a trophic hormone with a role in testicular descent in fetal life. Is a ligand for LGR8 receptor. The protein is Insulin-like 3 (Insl3) of Rattus norvegicus (Rat).